Reading from the N-terminus, the 785-residue chain is Probable splicing factor 3A subunit 1 (785 aa).

Position 1 is an N-acetylmethionine (M1). The interval 1–42 is disordered; sequence MFSSMQILPLEAPPTDGKLGPLPPSQLTDQEVEERELQAEQN. The stretch at 71-113 is one SURP motif 1 repeat; it reads IVEKTAQFVSKNGLEFEKRIIVSNEKNAKFNFLKSSDPYHAFY. The segment at 124–175 is disordered; sequence NKDGAQGTDDSDGTTDPQLDTGAADESEAGDTQPDLQAQFRIPSKPLEAPEP. Residues 193–235 form an SURP motif 2 repeat; it reads IIKLTAQFVARNGKSFLTGLSNRENNNPQFHFMKPTHSMFTFF. Disordered stretches follow at residues 522-554 and 639-713; these read NANG…GVPI and RPYG…PNEN. Composition is skewed to pro residues over residues 543–554 and 653–674; these read AALPPPRPGVPI and QPPP…PPLP. Positions 677–686 are enriched in basic and acidic residues; the sequence is PEAKRQKFDE. The region spanning 707-782 is the Ubiquitin-like domain; the sequence is VSKPNENDGQ…LTLSLRERGG (76 aa).

In terms of assembly, component of splicing factor SF3A which is composed of three subunits.

It localises to the nucleus. The sequence is that of Probable splicing factor 3A subunit 1 from Arabidopsis thaliana (Mouse-ear cress).